The following is a 64-amino-acid chain: Gallinacin-2 (64 aa).

The signal sequence occupies residues 1-22 (MRILYLLFSLLFLALQVSPGLS). A propeptide spanning residues 23–28 (SPRRDM) is cleaved from the precursor. 3 disulfides stabilise this stretch: cysteine 31/cysteine 57, cysteine 36/cysteine 51, and cysteine 41/cysteine 58.

In terms of tissue distribution, expressed in circulating heterophil granulocytes and bone marrow (at protein level). Strong expression in the bone marrow, lung and testis. Moderate expression in the bursa and intestine. Low expression in the cloaca, gall bladder, brain, pancreas, trachea, air sacs and spleen. Expressed in the vagina, ovarian stroma and the theca layer of the ovarian follicle, but not in the granulosa layer of the ovarian follicle.

Its subcellular location is the secreted. It is found in the cytoplasmic granule. In terms of biological role, potent antibacterial activity against the Gram-negative bacterium E.coli ML-35, and against the Gram-positive bacterium L.monocytogenes EGD. Lacks antifungal activity against C.albicans. The sequence is that of Gallinacin-2 (GAL2) from Gallus gallus (Chicken).